We begin with the raw amino-acid sequence, 332 residues long: Transcription factor HBP-1b(c38) (332 aa).

The interval 1-48 (MAEASPRTETSTDDTDENLMLEPGNAALAVVSDSSDRSRDKNGDQKTM) is disordered. The segment covering 34–47 (SSDRSRDKNGDQKT) has biased composition (basic and acidic residues). The region spanning 44–107 (DQKTMRRLAQ…SSADQSHSMS (64 aa)) is the bZIP domain. The interval 46-66 (KTMRRLAQNREAARKSRLRKK) is basic motif. A coiled-coil region spans residues 47–142 (TMRRLAQNRE…RAAVNAHAGD (96 aa)). The leucine-zipper stretch occupies residues 72-86 (LENSRLKLTQLEQEL). Residues 111-329 (ALAFDTEYAR…RALSSLWLAR (219 aa)) form the DOG1 domain.

This sequence belongs to the bZIP family. In terms of assembly, binds DNA as a dimer.

Its subcellular location is the nucleus. Transcriptional activator that binds specifically to the DNA sequence 5'-TGACG-3'. Recognizes ocs elements like the as-1 motif of the cauliflower mosaic virus 35S promoter. Binding to the as-1-like cis elements mediate auxin- and salicylic acid-inducible transcription. Binds to the hexamer motif 5'-ACGTCA-3' of histone gene promoters. In Triticum aestivum (Wheat), this protein is Transcription factor HBP-1b(c38).